Here is an 89-residue protein sequence, read N- to C-terminus: Small ribosomal subunit protein uS15 (89 aa).

It belongs to the universal ribosomal protein uS15 family. In terms of assembly, part of the 30S ribosomal subunit. Forms a bridge to the 50S subunit in the 70S ribosome, contacting the 23S rRNA.

In terms of biological role, one of the primary rRNA binding proteins, it binds directly to 16S rRNA where it helps nucleate assembly of the platform of the 30S subunit by binding and bridging several RNA helices of the 16S rRNA. Forms an intersubunit bridge (bridge B4) with the 23S rRNA of the 50S subunit in the ribosome. The chain is Small ribosomal subunit protein uS15 from Chlorobium phaeobacteroides (strain DSM 266 / SMG 266 / 2430).